Here is a 237-residue protein sequence, read N- to C-terminus: Demethylmenaquinone methyltransferase (237 aa).

S-adenosyl-L-methionine-binding positions include T58, D79, and 106–107; that span reads NA.

This sequence belongs to the class I-like SAM-binding methyltransferase superfamily. MenG/UbiE family.

It carries out the reaction a 2-demethylmenaquinol + S-adenosyl-L-methionine = a menaquinol + S-adenosyl-L-homocysteine + H(+). The protein operates within quinol/quinone metabolism; menaquinone biosynthesis; menaquinol from 1,4-dihydroxy-2-naphthoate: step 2/2. Methyltransferase required for the conversion of demethylmenaquinol (DMKH2) to menaquinol (MKH2). In Bacillus cereus (strain ATCC 10987 / NRS 248), this protein is Demethylmenaquinone methyltransferase.